Reading from the N-terminus, the 710-residue chain is Dendrin (710 aa).

4 disordered regions span residues 1–22 (MLDG…DEES), 62–195 (WARG…PWGG), 213–274 (AGTA…KRLD), and 324–375 (GLNS…GKEG). Residues 103–134 (AEVRAREQEKRKAASQEREAKETERKRRKAGG) adopt a coiled-coil conformation. A compositionally biased stretch (basic and acidic residues) spans 105 to 127 (VRAREQEKRKAASQEREAKETER). The interval 113–131 (RKAASQEREAKETERKRRK) is nuclear localization. Residues 186–236 (GVAWAGPWGGRRPGPPSYEAHLLLRGSAGTAPRRRWDRPPPYVAPPSYEGP) form an interaction with MAGI2 region. The span at 265-274 (EGGRTKKRLD) shows a compositional bias: basic and acidic residues. The interaction with ACTN1 stretch occupies residues 341–435 (PGTDAALSRS…LEVWKVTRRA (95 aa)). Basic residues predominate over residues 360-370 (PRSRQHLRGSR). Ser-388 carries the post-translational modification Phosphoserine. 3 disordered regions span residues 390–422 (KKPP…EGAE), 469–508 (PRTQ…ANPS), and 521–710 (NQPS…RERE). An interaction with CD2AP and NPHS1 region spans residues 407-708 (GGTGWKESLG…TRKTPQGNRE (302 aa)). The segment covering 469-491 (PRTQQGQLVPSGESCSVSDSLSQ) has biased composition (polar residues). The segment covering 693-710 (GFIREDTRKTPQGNRERE) has biased composition (basic and acidic residues).

As to quaternary structure, forms a ternary complex with MAGI2 and SH3KBP1; recruits DDN to the cytoplasm. Interacts with MAGI1. Interacts with ACTN1 and may interact with WWC1. Interacts with the podocyte slit diaphragm proteins CD2AP, NPHS1 and NPHS2; the interaction with CD2AP and NPHS1 is direct. In terms of tissue distribution, two forms of 81 kDa and 89 kDa are expressed in brain. The 81 kDa form is the only one found in kidney podocytes.

It localises to the cell projection. It is found in the dendritic spine membrane. The protein resides in the cytoplasm. The protein localises to the endoplasmic reticulum membrane. Its subcellular location is the perikaryon. It localises to the nucleus. Promotes apoptosis of kidney glomerular podocytes. Podocytes are highly specialized cells essential to the ultrafiltration of blood, resulting in the extraction of urine and the retention of protein. The polypeptide is Dendrin (Ddn) (Mus musculus (Mouse)).